A 1709-amino-acid polypeptide reads, in one-letter code: Hybrid signal transduction histidine kinase L (1709 aa).

Disordered regions lie at residues 52–192 (SNNN…SPPH), 206–276 (FFSG…NSSD), 413–535 (TSNS…NNSC), and 554–615 (QQQQ…IFNN). Residues 53–87 (NNNNNNNNNNNNNNNNNNNNNNNNNNNNNNNNNNN) show a composition bias toward low complexity. Basic and acidic residues predominate over residues 88–100 (NEEKSNNETEKTL). Low complexity predominate over residues 106–148 (TTTTTTTNNNNNNNNNNNNNNNNNNNNNNNNNNNNNNNNNNTN). Over residues 149-170 (SSNDIYMNSPSSTLSSPGNAGN) the composition is skewed to polar residues. Composition is skewed to low complexity over residues 413–466 (TSNS…TPNS), 486–535 (NNSP…NNSC), and 554–576 (QQQQ…PTTS). Over residues 585 to 610 (LTINTSFKTSPMSSPKSFNKPSQSPQ) the composition is skewed to polar residues. The PAS domain occupies 700–771 (ATRKMVTCIE…ATLTDKKTWN (72 aa)). Residues 770 to 822 (WNGFIRTRHNNNTLIYFEASISPVLDQFQQILYYNCTKRDVTQKRIDEESKTL) enclose the PAC domain. The Histidine kinase domain occupies 837–1059 (MMSHDIRTPM…TFTCILKFKK (223 aa)). The residue at position 840 (H840) is a Phosphohistidine; by autocatalysis. Disordered stretches follow at residues 1068–1112 (LLPA…HQQH) and 1137–1298 (QHQL…PTSP). Low complexity-rich tracts occupy residues 1075-1112 (LQQQ…HQQH), 1137-1153 (QHQL…LQQQ), and 1176-1194 (NQHI…QQQQ). The span at 1204-1221 (HNSHGHNHHGSHHNHNHQ) shows a compositional bias: basic residues. Polar residues-rich tracts occupy residues 1244-1257 (NEQQ…NSFS) and 1275-1298 (NISQ…PTSP). Response regulatory domains lie at 1312-1492 (KMLF…MMYL) and 1570-1692 (KVLV…KKYG). D1366 is modified (4-aspartylphosphate). Low complexity-rich tracts occupy residues 1390–1412 (QHLQ…SELQ) and 1420–1440 (KNSS…SSGG). The interval 1390–1440 (QHLQQQQEQEQQQQQEQQQSELQKQPDVENKNSSQNNDNNNNNNKSNSSGG) is disordered. D1622 carries the post-translational modification 4-aspartylphosphate.

In terms of processing, activation probably requires transfer of a phosphate group between a histidine in the kinase core (transmitter) domain and an aspartate of the receiver domain.

It catalyses the reaction ATP + protein L-histidine = ADP + protein N-phospho-L-histidine.. In terms of biological role, acts as a receptor histidine kinase for a signal transduction pathway. This protein undergoes an ATP-dependent autophosphorylation at a conserved histidine residue in the kinase core, and a phosphoryl group is then transferred to a conserved aspartate residue in the receiver domain. The protein is Hybrid signal transduction histidine kinase L (dhkL) of Dictyostelium discoideum (Social amoeba).